Consider the following 244-residue polypeptide: NAD(P)H-quinone oxidoreductase subunit K (244 aa).

Positions 60, 61, 125, and 156 each coordinate [4Fe-4S] cluster.

This sequence belongs to the complex I 20 kDa subunit family. NDH-1 can be composed of about 15 different subunits; different subcomplexes with different compositions have been identified which probably have different functions. [4Fe-4S] cluster serves as cofactor.

It is found in the cellular thylakoid membrane. It catalyses the reaction a plastoquinone + NADH + (n+1) H(+)(in) = a plastoquinol + NAD(+) + n H(+)(out). The enzyme catalyses a plastoquinone + NADPH + (n+1) H(+)(in) = a plastoquinol + NADP(+) + n H(+)(out). In terms of biological role, NDH-1 shuttles electrons from an unknown electron donor, via FMN and iron-sulfur (Fe-S) centers, to quinones in the respiratory and/or the photosynthetic chain. The immediate electron acceptor for the enzyme in this species is believed to be plastoquinone. Couples the redox reaction to proton translocation, and thus conserves the redox energy in a proton gradient. Cyanobacterial NDH-1 also plays a role in inorganic carbon-concentration. This Synechococcus sp. (strain CC9902) protein is NAD(P)H-quinone oxidoreductase subunit K.